The chain runs to 89 residues: Small ribosomal subunit protein uS15 (89 aa).

It belongs to the universal ribosomal protein uS15 family. In terms of assembly, part of the 30S ribosomal subunit. Forms a bridge to the 50S subunit in the 70S ribosome, contacting the 23S rRNA.

In terms of biological role, one of the primary rRNA binding proteins, it binds directly to 16S rRNA where it helps nucleate assembly of the platform of the 30S subunit by binding and bridging several RNA helices of the 16S rRNA. Its function is as follows. Forms an intersubunit bridge (bridge B4) with the 23S rRNA of the 50S subunit in the ribosome. This Shewanella halifaxensis (strain HAW-EB4) protein is Small ribosomal subunit protein uS15.